The following is a 124-amino-acid chain: S-adenosylmethionine decarboxylase proenzyme (124 aa).

Ser-63 (schiff-base intermediate with substrate; via pyruvic acid) is an active-site residue. Residue Ser-63 is modified to Pyruvic acid (Ser); by autocatalysis. Residue His-68 is the Proton acceptor; for processing activity of the active site. Cys-83 functions as the Proton donor; for catalytic activity in the catalytic mechanism.

Belongs to the prokaryotic AdoMetDC family. Type 1 subfamily. Heterotetramer of two alpha and two beta chains arranged as a dimer of alpha/beta heterodimers. Pyruvate serves as cofactor. Is synthesized initially as an inactive proenzyme. Formation of the active enzyme involves a self-maturation process in which the active site pyruvoyl group is generated from an internal serine residue via an autocatalytic post-translational modification. Two non-identical subunits are generated from the proenzyme in this reaction, and the pyruvate is formed at the N-terminus of the alpha chain, which is derived from the carboxyl end of the proenzyme. The post-translation cleavage follows an unusual pathway, termed non-hydrolytic serinolysis, in which the side chain hydroxyl group of the serine supplies its oxygen atom to form the C-terminus of the beta chain, while the remainder of the serine residue undergoes an oxidative deamination to produce ammonia and the pyruvoyl group blocking the N-terminus of the alpha chain.

It carries out the reaction S-adenosyl-L-methionine + H(+) = S-adenosyl 3-(methylsulfanyl)propylamine + CO2. It functions in the pathway amine and polyamine biosynthesis; S-adenosylmethioninamine biosynthesis; S-adenosylmethioninamine from S-adenosyl-L-methionine: step 1/1. Catalyzes the decarboxylation of S-adenosylmethionine to S-adenosylmethioninamine (dcAdoMet), the propylamine donor required for the synthesis of the polyamines spermine and spermidine from the diamine putrescine. The protein is S-adenosylmethionine decarboxylase proenzyme of Geobacillus kaustophilus (strain HTA426).